Here is a 291-residue protein sequence, read N- to C-terminus: Acetyl-coenzyme A carboxylase carboxyl transferase subunit beta (291 aa).

The interval 1–23 is disordered; the sequence is MSWLSKLMPSGIRTDNTPSKKRS. Residues 28–291 form the CoA carboxyltransferase N-terminal domain; that stretch reads LWEKCSNCGS…LGRQPAPEVA (264 aa). Residues cysteine 32, cysteine 35, cysteine 51, and cysteine 54 each coordinate Zn(2+). The segment at 32-54 adopts a C4-type zinc-finger fold; it reads CSNCGSALYRPELEENLEVCPKC.

It belongs to the AccD/PCCB family. Acetyl-CoA carboxylase is a heterohexamer composed of biotin carboxyl carrier protein (AccB), biotin carboxylase (AccC) and two subunits each of ACCase subunit alpha (AccA) and ACCase subunit beta (AccD). The cofactor is Zn(2+).

The protein localises to the cytoplasm. The catalysed reaction is N(6)-carboxybiotinyl-L-lysyl-[protein] + acetyl-CoA = N(6)-biotinyl-L-lysyl-[protein] + malonyl-CoA. The protein operates within lipid metabolism; malonyl-CoA biosynthesis; malonyl-CoA from acetyl-CoA: step 1/1. Its function is as follows. Component of the acetyl coenzyme A carboxylase (ACC) complex. Biotin carboxylase (BC) catalyzes the carboxylation of biotin on its carrier protein (BCCP) and then the CO(2) group is transferred by the transcarboxylase to acetyl-CoA to form malonyl-CoA. In Stenotrophomonas maltophilia (strain R551-3), this protein is Acetyl-coenzyme A carboxylase carboxyl transferase subunit beta.